A 1701-amino-acid chain; its full sequence is Coiled-coil domain-containing protein 180 (1701 aa).

Residues 1 to 35 are disordered; sequence MRGGENRPPARVQSSSEELELRHQSLDAFPGRRLP. Residues 171-198 are a coiled coil; it reads QRQAEHKRKSYESALASFQEEIAQVGKE. Disordered stretches follow at residues 657–808, 1272–1291, and 1319–1354; these read EKPS…DKEE, HHCDKDPSQTGRGAWACGSR, and GFKRHRCQPENSGKKAVPSASATSAGSFTPHPKPNK. The span at 661-671 shows a compositional bias: basic residues; the sequence is QKRVKKLRKKQ. Residues 672–682 are compositionally biased toward basic and acidic residues; it reads GSKEDMTRSEE. Residues 683 to 692 show a composition bias toward polar residues; sequence SISSGTSTAR. Residues 696 to 705 are compositionally biased toward acidic residues; sequence EVEEENDQEM. Positions 755 to 766 are enriched in basic and acidic residues; the sequence is ENVKGQGEKKEE. The stretch at 757–804 forms a coiled coil; that stretch reads VKGQGEKKEESEEEDEKEEEEEEEKLEEEKEEKEAQEEQESLSVGEEE. Residues 767 to 808 are compositionally biased toward acidic residues; it reads SEEEDEKEEEEEEEKLEEEKEEKEAQEEQESLSVGEEEDKEE.

The polypeptide is Coiled-coil domain-containing protein 180 (CCDC180) (Homo sapiens (Human)).